The following is a 64-amino-acid chain: Translation machinery-associated protein 7 homolog (64 aa).

Residues Met1–Lys64 form a disordered region. Residues Asp21–Arg50 adopt a coiled-coil conformation. Basic and acidic residues predominate over residues Glu28–Ala44. Positions Leu53–Lys64 are enriched in gly residues.

The protein belongs to the TMA7 family.

The protein is Translation machinery-associated protein 7 homolog of Caenorhabditis briggsae.